Here is a 631-residue protein sequence, read N- to C-terminus: Chaperone protein DnaK (631 aa).

The residue at position 175 (Thr-175) is a Phosphothreonine; by autocatalysis. Residues 586 to 631 are disordered; sequence GAEGAAAGAGAAGAAGAGASAGSASGSDDDTVEAEVVDDDDDKDNK. Residues 602–611 are compositionally biased toward low complexity; it reads AGASAGSASG. Positions 612-631 are enriched in acidic residues; that stretch reads SDDDTVEAEVVDDDDDKDNK.

The protein belongs to the heat shock protein 70 family.

Functionally, acts as a chaperone. This is Chaperone protein DnaK from Bifidobacterium longum subsp. infantis (strain ATCC 15697 / DSM 20088 / JCM 1222 / NCTC 11817 / S12).